The chain runs to 742 residues: Enhancer of polycomb-like protein 1 (742 aa).

Residues 1 to 27 (MPTPSAQLDQGIISSNGGTSGVSASST) are compositionally biased toward polar residues. 3 disordered regions span residues 1-28 (MPTP…SSTR), 416-446 (RQQS…QCQQ), and 718-742 (KKLV…HQQA). A compositionally biased stretch (low complexity) spans 724–734 (QRQQQQQQQEQ).

The protein belongs to the enhancer of polycomb family. As to quaternary structure, component of the NuA4 histone acetyltransferase complex.

It localises to the nucleus. Component of the NuA4 histone acetyltransferase complex which is involved in transcriptional activation of selected genes principally by acetylation of nucleosomal histone H4 and H2A. The NuA4 complex is also involved in DNA repair. Involved in gene silencing by neighboring heterochromatin, blockage of the silencing spreading along the chromosome, and required for cell cycle progression through G2/M. This is Enhancer of polycomb-like protein 1 (EPL1) from Eremothecium gossypii (strain ATCC 10895 / CBS 109.51 / FGSC 9923 / NRRL Y-1056) (Yeast).